The sequence spans 311 residues: MSGENNSSVTEFILAGLSEQPELQLPLFLLFLGIYVVTVVGNLGMTTLIWLSSHLHTPMYYFLSSLSFIDFCHSTVITPKMLVNFVTEKNIISYPECMTQLYFFLVFAIAECHMLAAMAYDRYMAICSPLLYSVIISNKACFSLILGVYIIGLVCASVHTGCMFRVQFCKFDLINHYFCDLLPLLKLSCSSIYVNKLLILCVGAFNILVPSLTILCSYIFIIASILHIRSTEGRSKAFSTCSSHMLAVVIFFGSAAFMYLQPSSISSMDQGKVSSVFYTIIVPMLNPLIYSLRNKDVHVSLKKMLQRRTLL.

The Extracellular segment spans residues 1–25 (MSGENNSSVTEFILAGLSEQPELQL). N-linked (GlcNAc...) asparagine glycans are attached at residues asparagine 5 and asparagine 6. The chain crosses the membrane as a helical span at residues 26–46 (PLFLLFLGIYVVTVVGNLGMT). Over 47–54 (TLIWLSSH) the chain is Cytoplasmic. The helical transmembrane segment at 55–75 (LHTPMYYFLSSLSFIDFCHST) threads the bilayer. Topologically, residues 76 to 99 (VITPKMLVNFVTEKNIISYPECMT) are extracellular. A disulfide bond links cysteine 97 and cysteine 189. Residues 100 to 120 (QLYFFLVFAIAECHMLAAMAY) traverse the membrane as a helical segment. Over 121-139 (DRYMAICSPLLYSVIISNK) the chain is Cytoplasmic. The helical transmembrane segment at 140–160 (ACFSLILGVYIIGLVCASVHT) threads the bilayer. At 161–197 (GCMFRVQFCKFDLINHYFCDLLPLLKLSCSSIYVNKL) the chain is on the extracellular side. Residues 198 to 217 (LILCVGAFNILVPSLTILCS) form a helical membrane-spanning segment. Topologically, residues 218–237 (YIFIIASILHIRSTEGRSKA) are cytoplasmic. Residues 238–258 (FSTCSSHMLAVVIFFGSAAFM) traverse the membrane as a helical segment. Residues 259 to 271 (YLQPSSISSMDQG) lie on the Extracellular side of the membrane. The chain crosses the membrane as a helical span at residues 272–292 (KVSSVFYTIIVPMLNPLIYSL). Topologically, residues 293–311 (RNKDVHVSLKKMLQRRTLL) are cytoplasmic.

It belongs to the G-protein coupled receptor 1 family.

The protein resides in the cell membrane. Functionally, odorant receptor. The chain is Olfactory receptor 8G1 (OR8G1) from Homo sapiens (Human).